The sequence spans 510 residues: 2,3-bisphosphoglycerate-independent phosphoglycerate mutase (510 aa).

Mn(2+) contacts are provided by D12 and S62. S62 acts as the Phosphoserine intermediate in catalysis. Residues H123, 153 to 154, R185, R191, 260 to 263, and K335 each bind substrate; these read RD and RPDR. D402, H406, D443, H444, and H461 together coordinate Mn(2+).

This sequence belongs to the BPG-independent phosphoglycerate mutase family. As to quaternary structure, monomer. Mn(2+) is required as a cofactor.

The enzyme catalyses (2R)-2-phosphoglycerate = (2R)-3-phosphoglycerate. Its pathway is carbohydrate degradation; glycolysis; pyruvate from D-glyceraldehyde 3-phosphate: step 3/5. Catalyzes the interconversion of 2-phosphoglycerate and 3-phosphoglycerate. The polypeptide is 2,3-bisphosphoglycerate-independent phosphoglycerate mutase (Listeria welshimeri serovar 6b (strain ATCC 35897 / DSM 20650 / CCUG 15529 / CIP 8149 / NCTC 11857 / SLCC 5334 / V8)).